Reading from the N-terminus, the 224-residue chain is Germin-like protein 8-12 (224 aa).

An N-terminal signal peptide occupies residues 1–23 (MASSSLFLLGALLVLASWQAIVA). A disulfide bridge connects residues Cys-33 and Cys-48. Residues 60 to 213 (FNAAKFDMPR…AFQVEKKLID (154 aa)) enclose the Cupin type-1 domain. An N-linked (GlcNAc...) asparagine glycan is attached at Asn-78. Positions 111, 113, 118, and 158 each coordinate Mn(2+).

This sequence belongs to the germin family. Oligomer (believed to be a pentamer but probably hexamer).

The protein localises to the secreted. Its subcellular location is the extracellular space. It is found in the apoplast. Functionally, plays a role in broad-spectrum disease resistance. Probably has no oxalate oxidase activity even if the active site is conserved. The chain is Germin-like protein 8-12 from Oryza sativa subsp. japonica (Rice).